A 213-amino-acid polypeptide reads, in one-letter code: MKKTLLGSLILLAFAGNVQADINTETSGKVTFFGKVVENTCKVKTEHKNLSVVLNDVGKNSLSTKVNTAMPTPFTITLQNCDPTTANGTANKANKVGLYFYSWKNVDKENNFTLKNEQTTADYATNVNIQLMESNGTKAISVVGKETEDFMHTNNNGVALNQTHPNNTHISGSTQLTTGTNELPLHFIAQYYATNKATAGKVQSSVDFQIAYE.

The signal sequence occupies residues 1-20; the sequence is MKKTLLGSLILLAFAGNVQA. An intrachain disulfide couples Cys-41 to Cys-81.

It belongs to the fimbrial protein family.

The protein localises to the fimbrium. Its function is as follows. Mediates adherence to oropharyngeal epithelial cells. Helps the airway colonization process. The sequence is that of Major fimbrial subunit (hifA) from Haemophilus influenzae.